Reading from the N-terminus, the 153-residue chain is MALYEHVFLARQDMSAQQVDALVEQYKGVIEANGGKVGRVENWGLKSLTYRINKNRKAHYALMDIDAPAAAVHEVERQMRINEDVLRYMTIAVEAHEEGPSAMMQKRDRDDRPRRDGDRPDRGDRGDRGDRGPREGGRESFGDRPRRPREDRA.

The segment at 94 to 153 is disordered; it reads EAHEEGPSAMMQKRDRDDRPRRDGDRPDRGDRGDRGDRGPREGGRESFGDRPRRPREDRA.

Belongs to the bacterial ribosomal protein bS6 family.

Binds together with bS18 to 16S ribosomal RNA. This is Small ribosomal subunit protein bS6 from Allorhizobium ampelinum (strain ATCC BAA-846 / DSM 112012 / S4) (Agrobacterium vitis (strain S4)).